Consider the following 576-residue polypeptide: 4-alpha-glucanotransferase DPE1, chloroplastic/amyloplastic (576 aa).

The N-terminal 45 residues, methionine 1–arginine 45, are a transit peptide targeting the chloroplast.

Belongs to the disproportionating enzyme family.

Its subcellular location is the plastid. It is found in the chloroplast. The protein resides in the amyloplast. It carries out the reaction Transfers a segment of a (1-&gt;4)-alpha-D-glucan to a new position in an acceptor, which may be glucose or a (1-&gt;4)-alpha-D-glucan.. In terms of biological role, chloroplastic alpha-glucanotransferase involved in maltotriose metabolism. Probably uses maltotriose as substrate to transfer a maltosyl unit from one molecule to another, resulting in glucose and maltopentaose. The latter can then be further metabolized to maltose and maltotriose by beta-amylase. Required for normal starch degradation in leaves. The chain is 4-alpha-glucanotransferase DPE1, chloroplastic/amyloplastic (DPE1) from Arabidopsis thaliana (Mouse-ear cress).